The sequence spans 102 residues: Protein B1 (102 aa).

The segment at 1-102 (MLNDAKQTRA…AQPQPSNNRK (102 aa)) is disordered. Polar residues-rich tracts occupy residues 8 to 17 (TRANPGTSRP) and 51 to 65 (GKTNGKSDGNITAGE). Residues 75–88 (KGPRGGKTNTRRTP) show a composition bias toward basic residues.

Functionally, not known. Encoded on a subgenomic RNA (RNA3) synthesized during replication and which is co-terminal with RNA1. The protein is Protein B1 (B1) of Black beetle virus (BBV).